Here is a 298-residue protein sequence, read N- to C-terminus: Lactose transport system permease protein LacF (298 aa).

Transmembrane regions (helical) follow at residues 17 to 37, 77 to 97, 112 to 132, 151 to 171, 208 to 228, and 269 to 289; these read GWLFVAPAIALISVFMLYPIL, VIFFVVQVPIMITMALILAAM, MIFLPCVSSLVAYSILFKSMF, PIGWLTDPFWAKVLIIIAITW, AFLTIPMLKPVILFTTITSTI, and FSYAATVSYVIVLMVAVLSFL. Positions 73 to 290 constitute an ABC transmembrane type-1 domain; that stretch reads LQNTVIFFVV…LMVAVLSFLQ (218 aa).

The protein belongs to the binding-protein-dependent transport system permease family. MalFG subfamily.

Its subcellular location is the cell inner membrane. Part of the binding-protein-dependent transport system for lactose. Probably responsible for the translocation of the substrate across the membrane. This chain is Lactose transport system permease protein LacF (lacF), found in Rhizobium radiobacter (Agrobacterium tumefaciens).